The following is a 144-amino-acid chain: Cytochrome c-type biogenesis protein CcmE (144 aa).

Residues 1–7 (MTRKQKR) lie on the Cytoplasmic side of the membrane. The helical; Signal-anchor for type II membrane protein transmembrane segment at 8 to 28 (LAVIGSGMGFLALAAALTFYA) threads the bilayer. The Periplasmic portion of the chain corresponds to 29–144 (LGQQTSYFYM…LKKDGLWQEQ (116 aa)). Residues histidine 122 and tyrosine 126 each coordinate heme.

The protein belongs to the CcmE/CycJ family.

The protein localises to the cell inner membrane. In terms of biological role, heme chaperone required for the biogenesis of c-type cytochromes. Transiently binds heme delivered by CcmC and transfers the heme to apo-cytochromes in a process facilitated by CcmF and CcmH. This is Cytochrome c-type biogenesis protein CcmE from Chelativorans sp. (strain BNC1).